The primary structure comprises 705 residues: Effector protein AvrPphDPsv (705 aa).

The segment covering 1–15 (MNPLQSIQHNITTPP) has biased composition (polar residues). Disordered regions lie at residues 1–40 (MNPL…ISPS) and 175–205 (RLET…RRES).

It localises to the secreted. Functionally, effector protein involved in non-host recognition. This is Effector protein AvrPphDPsv (avrPphDPsv) from Pseudomonas savastanoi (Pseudomonas syringae pv. savastanoi).